The sequence spans 121 residues: Small ribosomal subunit protein uS13 (121 aa).

Residues 91 to 121 (HRRGLPVRGQNSKNNARTRKGPRRTVANKKK) form a disordered region. Residues 106 to 121 (ARTRKGPRRTVANKKK) show a composition bias toward basic residues.

Belongs to the universal ribosomal protein uS13 family. Part of the 30S ribosomal subunit. Forms a loose heterodimer with protein S19. Forms two bridges to the 50S subunit in the 70S ribosome.

Functionally, located at the top of the head of the 30S subunit, it contacts several helices of the 16S rRNA. In the 70S ribosome it contacts the 23S rRNA (bridge B1a) and protein L5 of the 50S subunit (bridge B1b), connecting the 2 subunits; these bridges are implicated in subunit movement. Contacts the tRNAs in the A and P-sites. The polypeptide is Small ribosomal subunit protein uS13 (Bacillus cereus (strain ZK / E33L)).